Here is a 401-residue protein sequence, read N- to C-terminus: tRNA N6-adenosine threonylcarbamoyltransferase (401 aa).

Positions 111 and 115 each coordinate Fe cation. Residues 191–195 (LASGG), D223, G236, and N336 each bind substrate. D364 contacts Fe cation.

This sequence belongs to the KAE1 / TsaD family. Requires Fe(2+) as cofactor.

Its subcellular location is the cytoplasm. The enzyme catalyses L-threonylcarbamoyladenylate + adenosine(37) in tRNA = N(6)-L-threonylcarbamoyladenosine(37) in tRNA + AMP + H(+). Its function is as follows. Required for the formation of a threonylcarbamoyl group on adenosine at position 37 (t(6)A37) in tRNAs that read codons beginning with adenine. Is involved in the transfer of the threonylcarbamoyl moiety of threonylcarbamoyl-AMP (TC-AMP) to the N6 group of A37, together with TsaE and TsaB. TsaD likely plays a direct catalytic role in this reaction. This Tropheryma whipplei (strain TW08/27) (Whipple's bacillus) protein is tRNA N6-adenosine threonylcarbamoyltransferase.